Here is a 179-residue protein sequence, read N- to C-terminus: FADH(2)-dependent resorcinol hydroxylase, reductase component (179 aa).

The protein belongs to the non-flavoprotein flavin reductase family. In terms of assembly, the FADH(2)-dependent resorcinol hydroxylase is composed of two subunits, GraA (the oxygenase component) and GraD (the reductase component). Both subunits are required for activity.

The enzyme catalyses FADH2 + NAD(+) = FAD + NADH + 2 H(+). Its pathway is aromatic compound metabolism. Its function is as follows. Involved in the gamma-resorcylate (2,6-dihydroxybenzoate) catabolism. Reductase component of the resorcinol hydroxylase, which catalyzes the FADPH-dependent conversion of resorcinol to hydroxyquinol. Catalyzes the reduction of FAD by NADH. The reduced flavin is then transferred to the oxygenase component GraA. This is FADH(2)-dependent resorcinol hydroxylase, reductase component from Rhizobium sp. (strain MTP-10005).